The sequence spans 95 residues: uncharacterized protein (95 aa).

This is an uncharacterized protein from Schizosaccharomyces pombe (strain 972 / ATCC 24843) (Fission yeast).